Reading from the N-terminus, the 130-residue chain is Small ribosomal subunit protein uS9 (130 aa).

This sequence belongs to the universal ribosomal protein uS9 family.

The sequence is that of Small ribosomal subunit protein uS9 from Neisseria gonorrhoeae (strain ATCC 700825 / FA 1090).